We begin with the raw amino-acid sequence, 189 residues long: Ribosome hibernation promotion factor (189 aa).

It belongs to the HPF/YfiA ribosome-associated protein family. Long HPF subfamily. Interacts with 100S ribosomes. Not associated with 70S ribosome monomers, about 1 monomer per ribosome.

It is found in the cytoplasm. Required for dimerization of active 70S ribosomes into 100S ribosomes in stationary phase; 100S ribosomes are translationally inactive and sometimes present during exponential growth. May not be the only factor implicated. Might negatively regulate the activity of the sigma-54 factor (SigL). The protein is Ribosome hibernation promotion factor (yvyD) of Bacillus subtilis (strain 168).